The following is a 201-amino-acid chain: Small ribosomal subunit protein uS4c (201 aa).

The disordered stretch occupies residues 20-44 (GLTSKRPKAGSDLRNQSRSGKKSQY). The S4 RNA-binding domain maps to 89-152 (MRLDNILFRL…NSRTLVQNLL (64 aa)).

The protein belongs to the universal ribosomal protein uS4 family. Part of the 30S ribosomal subunit. Contacts protein S5. The interaction surface between S4 and S5 is involved in control of translational fidelity.

Its subcellular location is the plastid. The protein localises to the chloroplast. Its function is as follows. One of the primary rRNA binding proteins, it binds directly to 16S rRNA where it nucleates assembly of the body of the 30S subunit. In terms of biological role, with S5 and S12 plays an important role in translational accuracy. The protein is Small ribosomal subunit protein uS4c (rps4) of Barbarea verna (Land cress).